The sequence spans 180 residues: UPF0227 protein Ent638_1623 (180 aa).

This sequence belongs to the UPF0227 family.

The protein is UPF0227 protein Ent638_1623 of Enterobacter sp. (strain 638).